The sequence spans 344 residues: Arginine N-succinyltransferase (344 aa).

Leu125 serves as a coordination point for succinyl-CoA. His229 serves as the catalytic Proton donor.

Belongs to the arginine N-succinyltransferase family.

It carries out the reaction succinyl-CoA + L-arginine = N(2)-succinyl-L-arginine + CoA + H(+). It functions in the pathway amino-acid degradation; L-arginine degradation via AST pathway; L-glutamate and succinate from L-arginine: step 1/5. Functionally, catalyzes the transfer of succinyl-CoA to arginine to produce N(2)-succinylarginine. The sequence is that of Arginine N-succinyltransferase from Salmonella agona (strain SL483).